The following is an 84-amino-acid chain: Defensin-like protein 37 (84 aa).

The first 24 residues, 1-24 (MAVKLIYLFLFLYIALLISGRTMS), serve as a signal peptide directing secretion. Disulfide bonds link Cys-46–Cys-67, Cys-52–Cys-79, and Cys-56–Cys-81.

The protein belongs to the DEFL family.

It localises to the secreted. The protein is Defensin-like protein 37 (EDA21) of Arabidopsis thaliana (Mouse-ear cress).